Consider the following 193-residue polypeptide: Ion-translocating oxidoreductase complex subunit A (193 aa).

6 helical membrane passes run 5–25, 39–59, 72–92, 102–122, 134–154, and 171–191; these read LLLLVGTVLVNNFVLVQFLGL, IGMSFATVFVMTLASLLSYLV, LTTMSFILVIAVVVQFTEMVV, LLGIFLPLITTNCAVLGVALL, IIYGFGAALGFSLVLIMFSAM, and AIAMITAGLMSLAFLGFTGLV.

Belongs to the NqrDE/RnfAE family. The complex is composed of six subunits: RnfA, RnfB, RnfC, RnfD, RnfE and RnfG.

Its subcellular location is the cell inner membrane. Its function is as follows. Part of a membrane-bound complex that couples electron transfer with translocation of ions across the membrane. The protein is Ion-translocating oxidoreductase complex subunit A of Colwellia psychrerythraea (strain 34H / ATCC BAA-681) (Vibrio psychroerythus).